Here is a 536-residue protein sequence, read N- to C-terminus: CTP synthase (536 aa).

The segment at 1 to 268 (MSFKSIFLTG…VDFLLSKFGF (268 aa)) is amidoligase domain. Residue serine 14 coordinates CTP. Position 14 (serine 14) interacts with UTP. ATP is bound at residue 15–20 (SLGKGL). Tyrosine 55 provides a ligand contact to L-glutamine. ATP is bound at residue aspartate 72. Mg(2+)-binding residues include aspartate 72 and glutamate 142. CTP is bound by residues 149–151 (DIE), 188–193 (KTKPTQ), and lysine 224. UTP-binding positions include 188–193 (KTKPTQ) and lysine 224. A Glutamine amidotransferase type-1 domain is found at 294–532 (RIGLVGKYLE…LSAALDYSLE (239 aa)). Position 353 (glycine 353) interacts with L-glutamine. The active-site Nucleophile; for glutamine hydrolysis is cysteine 380. Residues 381–384 (LGMQ), glutamate 404, and arginine 460 contribute to the L-glutamine site. Residues histidine 505 and glutamate 507 contribute to the active site.

Belongs to the CTP synthase family. As to quaternary structure, homotetramer.

The catalysed reaction is UTP + L-glutamine + ATP + H2O = CTP + L-glutamate + ADP + phosphate + 2 H(+). It catalyses the reaction L-glutamine + H2O = L-glutamate + NH4(+). The enzyme catalyses UTP + NH4(+) + ATP = CTP + ADP + phosphate + 2 H(+). The protein operates within pyrimidine metabolism; CTP biosynthesis via de novo pathway; CTP from UDP: step 2/2. With respect to regulation, allosterically activated by GTP, when glutamine is the substrate; GTP has no effect on the reaction when ammonia is the substrate. The allosteric effector GTP functions by stabilizing the protein conformation that binds the tetrahedral intermediate(s) formed during glutamine hydrolysis. Inhibited by the product CTP, via allosteric rather than competitive inhibition. Functionally, catalyzes the ATP-dependent amination of UTP to CTP with either L-glutamine or ammonia as the source of nitrogen. Regulates intracellular CTP levels through interactions with the four ribonucleotide triphosphates. This chain is CTP synthase, found in Chlamydia muridarum (strain MoPn / Nigg).